Reading from the N-terminus, the 168-residue chain is Peptidyl-Lys metalloendopeptidase (168 aa).

2 disulfides stabilise this stretch: Cys-6/Cys-76 and Cys-78/Cys-98. Residue His-118 coordinates Zn(2+). Residue Glu-119 is part of the active site. His-122 and Asp-131 together coordinate Zn(2+).

It depends on Zn(2+) as a cofactor.

It localises to the secreted. It catalyses the reaction Preferential cleavage in proteins: -Xaa-|-Lys- (in which Xaa may be Pro).. Inhibited by chelating agents such as EDTA and 1,10-phenanthroline. The chain is Peptidyl-Lys metalloendopeptidase (MEP) from Pleurotus ostreatus (Oyster mushroom).